We begin with the raw amino-acid sequence, 252 residues long: Imidazole glycerol phosphate synthase subunit HisF (252 aa).

Active-site residues include Asp-11 and Asp-130.

The protein belongs to the HisA/HisF family. As to quaternary structure, heterodimer of HisH and HisF.

It localises to the cytoplasm. It carries out the reaction 5-[(5-phospho-1-deoxy-D-ribulos-1-ylimino)methylamino]-1-(5-phospho-beta-D-ribosyl)imidazole-4-carboxamide + L-glutamine = D-erythro-1-(imidazol-4-yl)glycerol 3-phosphate + 5-amino-1-(5-phospho-beta-D-ribosyl)imidazole-4-carboxamide + L-glutamate + H(+). It participates in amino-acid biosynthesis; L-histidine biosynthesis; L-histidine from 5-phospho-alpha-D-ribose 1-diphosphate: step 5/9. Functionally, IGPS catalyzes the conversion of PRFAR and glutamine to IGP, AICAR and glutamate. The HisF subunit catalyzes the cyclization activity that produces IGP and AICAR from PRFAR using the ammonia provided by the HisH subunit. The protein is Imidazole glycerol phosphate synthase subunit HisF of Rhodospirillum rubrum (strain ATCC 11170 / ATH 1.1.1 / DSM 467 / LMG 4362 / NCIMB 8255 / S1).